We begin with the raw amino-acid sequence, 63 residues long: 2-hydroxymuconate tautomerase (63 aa).

Proline 2 acts as the Proton acceptor; via imino nitrogen in catalysis.

The protein belongs to the 4-oxalocrotonate tautomerase family. As to quaternary structure, homohexamer.

The catalysed reaction is (2Z,4E)-2-hydroxyhexa-2,4-dienedioate = (3E)-2-oxohex-3-enedioate. The protein operates within xenobiotic degradation; toluene degradation. Its function is as follows. Catalyzes the ketonization of 2-hydroxymuconate stereoselectively to yield 2-oxo-3-hexenedioate. The sequence is that of 2-hydroxymuconate tautomerase (dmpI) from Pseudomonas sp. (strain CF600).